An 89-amino-acid polypeptide reads, in one-letter code: Small ribosomal subunit protein uS17 (89 aa).

Belongs to the universal ribosomal protein uS17 family. Part of the 30S ribosomal subunit.

Functionally, one of the primary rRNA binding proteins, it binds specifically to the 5'-end of 16S ribosomal RNA. The chain is Small ribosomal subunit protein uS17 from Variovorax paradoxus (strain S110).